Consider the following 218-residue polypeptide: uncharacterized protein (218 aa).

A chloroplast-targeting transit peptide spans 1 to 28 (MLSLQCLPPFFISVPNRSTNSCSTAPLR).

It belongs to the SixA phosphatase family.

It is found in the plastid. Its subcellular location is the chloroplast. This is an uncharacterized protein from Arabidopsis thaliana (Mouse-ear cress).